The following is a 227-amino-acid chain: N-acetyltransferase 8B (227 aa).

The Cytoplasmic portion of the chain corresponds to 1 to 42 (MAPYHIRKYQESDRKSVVGLLSGGMAEHAPATFRRLLKLPRT). A helical; Signal-anchor for type II membrane protein membrane pass occupies residues 43–63 (LILLLGGALALLLVSGSWILA). Residues 61–214 (ILALVFSLSL…ARLVDLHTVH (154 aa)) enclose the N-acetyltransferase domain. The Lumenal portion of the chain corresponds to 64 to 227 (LVFSLSLLPA…HLPSAQAGRL (164 aa)). Position 99 is an N6-acetyllysine (Lys-99).

This sequence belongs to the NAT8 family. Post-translationally, acetylation on Lys-99 modulates enzymatic activity.

The protein localises to the endoplasmic reticulum-Golgi intermediate compartment membrane. The protein resides in the endoplasmic reticulum membrane. It catalyses the reaction L-lysyl-[protein] + acetyl-CoA = N(6)-acetyl-L-lysyl-[protein] + CoA + H(+). Its activity is regulated as follows. Allosterically regulated by acetylation at residue Lys-99. Its function is as follows. Endoplasmic reticulum (ER)-membrane-bound lysine N-acetyltransferase catalyzing the N6-acetylation of lysine residues in the lumen of the ER in various proteins, including PROM1 and BACE1, using acetyl-CoA as acetyl donor. Thereby, may regulate apoptosis through the acetylation and the regulation of the expression of PROM1. Acetylates and stabilizes BACE1 immature protein, leading to increased steady-state levels in neurons. By acting on BACE1 expression, may regulate amyloid beta-peptide formation. N(6)-lysine acetylation in ER maintains protein homeostasis and regulates reticulophagy. In Homo sapiens (Human), this protein is N-acetyltransferase 8B.